The primary structure comprises 351 residues: Homeobox-leucine zipper protein HOX23 (351 aa).

Residues 34–128 (LQDHAHGGHG…SFESGNKLEP (95 aa)) form a disordered region. Positions 56-65 (SPFLPDLAMD) are enriched in low complexity. A DNA-binding region (homeobox) is located at residues 101 to 160 (GGEKKRRLSVEQVRTLERSFESGNKLEPERKAQLARALGLQPRQVAIWFQNRRARWKTKQ). The segment covering 114-128 (RTLERSFESGNKLEP) has biased composition (basic and acidic residues). Residues 159-203 (KQLEKDFDALRRQLDAARAENDALLSLNSKLHAEIVALKGGAAAA) are leucine-zipper. The tract at residues 227-263 (EASCSNRSENSSEINLDISRPAPPPPPPPANESPVNR) is disordered. A compositionally biased stretch (polar residues) spans 228–240 (ASCSNRSENSSEI). Pro residues predominate over residues 247-257 (PAPPPPPPPAN).

It belongs to the HD-ZIP homeobox family. Class I subfamily. Expressed in seedlings, roots, stems, leaf sheaths and panicles.

The protein localises to the nucleus. Its function is as follows. Probable transcription factor. The protein is Homeobox-leucine zipper protein HOX23 (HOX23) of Oryza sativa subsp. indica (Rice).